Consider the following 156-residue polypeptide: Small ribosomal subunit protein uS7 (156 aa).

This sequence belongs to the universal ribosomal protein uS7 family. Part of the 30S ribosomal subunit. Contacts proteins S9 and S11.

One of the primary rRNA binding proteins, it binds directly to 16S rRNA where it nucleates assembly of the head domain of the 30S subunit. Is located at the subunit interface close to the decoding center, probably blocks exit of the E-site tRNA. The protein is Small ribosomal subunit protein uS7 of Myxococcus xanthus (strain DK1622).